A 372-amino-acid polypeptide reads, in one-letter code: Lipoyl synthase, mitochondrial (372 aa).

Residues cysteine 103, cysteine 108, cysteine 114, cysteine 134, cysteine 138, cysteine 141, and serine 349 each contribute to the [4Fe-4S] cluster site. Positions 119–338 (EHGTQTATIM…EERGNQLGFL (220 aa)) constitute a Radical SAM core domain.

It belongs to the radical SAM superfamily. Lipoyl synthase family. [4Fe-4S] cluster serves as cofactor.

It is found in the mitochondrion. It catalyses the reaction [[Fe-S] cluster scaffold protein carrying a second [4Fe-4S](2+) cluster] + N(6)-octanoyl-L-lysyl-[protein] + 2 oxidized [2Fe-2S]-[ferredoxin] + 2 S-adenosyl-L-methionine + 4 H(+) = [[Fe-S] cluster scaffold protein] + N(6)-[(R)-dihydrolipoyl]-L-lysyl-[protein] + 4 Fe(3+) + 2 hydrogen sulfide + 2 5'-deoxyadenosine + 2 L-methionine + 2 reduced [2Fe-2S]-[ferredoxin]. It participates in protein modification; protein lipoylation via endogenous pathway; protein N(6)-(lipoyl)lysine from octanoyl-[acyl-carrier-protein]: step 2/2. Functionally, catalyzes the radical-mediated insertion of two sulfur atoms into the C-6 and C-8 positions of the octanoyl moiety bound to the lipoyl domains of lipoate-dependent enzymes, thereby converting the octanoylated domains into lipoylated derivatives. The sequence is that of Lipoyl synthase, mitochondrial from Drosophila willistoni (Fruit fly).